The sequence spans 327 residues: Methionyl-tRNA formyltransferase (327 aa).

121–124 (SLLP) contributes to the (6S)-5,6,7,8-tetrahydrofolate binding site.

Belongs to the Fmt family.

The catalysed reaction is L-methionyl-tRNA(fMet) + (6R)-10-formyltetrahydrofolate = N-formyl-L-methionyl-tRNA(fMet) + (6S)-5,6,7,8-tetrahydrofolate + H(+). Its function is as follows. Attaches a formyl group to the free amino group of methionyl-tRNA(fMet). The formyl group appears to play a dual role in the initiator identity of N-formylmethionyl-tRNA by promoting its recognition by IF2 and preventing the misappropriation of this tRNA by the elongation apparatus. This chain is Methionyl-tRNA formyltransferase, found in Burkholderia ambifaria (strain ATCC BAA-244 / DSM 16087 / CCUG 44356 / LMG 19182 / AMMD) (Burkholderia cepacia (strain AMMD)).